Consider the following 459-residue polypeptide: Cysteine--tRNA ligase (459 aa).

Cys-28 serves as a coordination point for Zn(2+). The 'HIGH' region motif lies at 30 to 40; sequence VTIYDLCHIGH. The Zn(2+) site is built by Cys-209, His-234, and Glu-238. A 'KMSKS' region motif is present at residues 266-270; that stretch reads KMSKS. Lys-269 lines the ATP pocket.

This sequence belongs to the class-I aminoacyl-tRNA synthetase family. Monomer. Zn(2+) is required as a cofactor.

Its subcellular location is the cytoplasm. The catalysed reaction is tRNA(Cys) + L-cysteine + ATP = L-cysteinyl-tRNA(Cys) + AMP + diphosphate. In Shewanella loihica (strain ATCC BAA-1088 / PV-4), this protein is Cysteine--tRNA ligase.